We begin with the raw amino-acid sequence, 89 residues long: Small ribosomal subunit protein bS20 (89 aa).

Disordered stretches follow at residues 1 to 25 (MANIKSAIKRAKTSEKRRAHNASMK) and 69 to 89 (KNAASRQKSRLAKKLNSIQAS). Positions 7-20 (AIKRAKTSEKRRAH) are enriched in basic residues.

It belongs to the bacterial ribosomal protein bS20 family.

Functionally, binds directly to 16S ribosomal RNA. This is Small ribosomal subunit protein bS20 from Geobacillus thermodenitrificans (strain NG80-2).